Reading from the N-terminus, the 1910-residue chain is C2 domain-containing protein (1910 aa).

Residues Met1–Pro28 show a composition bias toward basic and acidic residues. 3 disordered regions span residues Met1–Asp54, Ala355–Gly377, and Leu398–Gln428. Over residues Lys414–Lys423 the composition is skewed to basic and acidic residues. One can recognise a C2 domain in the interval Gln557–Asn678. Composition is skewed to basic and acidic residues over residues Leu1192–Arg1205 and Gly1215–Gly1228. Disordered stretches follow at residues Leu1192–Gly1267, Ala1405–Gln1424, Leu1431–Ala1654, Gln1666–Ser1747, Ala1822–Asp1841, and Asp1879–Thr1910. 2 stretches are compositionally biased toward low complexity: residues Ala1239–Ala1257 and Ala1405–Thr1414. A compositionally biased stretch (basic residues) spans Lys1440–Lys1469. A compositionally biased stretch (low complexity) spans Pro1492 to Pro1502. Over residues Lys1517–Lys1526 the composition is skewed to basic residues. A compositionally biased stretch (low complexity) spans Pro1550–Ala1561. The segment covering Glu1569–Thr1584 has biased composition (basic and acidic residues). A compositionally biased stretch (polar residues) spans Leu1595–Val1604. Composition is skewed to low complexity over residues Val1620 to Ala1629 and Ser1675 to Ser1698. Over residues Ala1701 to Arg1711 the composition is skewed to basic and acidic residues. Low complexity-rich tracts occupy residues Ala1712–Ala1722 and Val1729–Ser1747. Residues Gln1766–Leu1828 are a coiled coil. Residues Glu1890–Leu1904 show a composition bias toward polar residues.

The protein resides in the membrane. In terms of biological role, regulates microneme secretion. Probably involved in regulation of rhoptry and dense granule secretion. The protein is C2 domain-containing protein of Toxoplasma gondii.